We begin with the raw amino-acid sequence, 138 residues long: Basic phospholipase A2 B (138 aa).

Residues 1–16 form the signal peptide; the sequence is MRALWIVAVLLLGVEG. Cystine bridges form between Cys-42–Cys-131, Cys-44–Cys-60, Cys-59–Cys-111, Cys-65–Cys-138, Cys-66–Cys-104, Cys-73–Cys-97, and Cys-91–Cys-102. Ca(2+)-binding residues include Tyr-43, Gly-45, and Gly-47. His-63 is an active-site residue. Asp-64 serves as a coordination point for Ca(2+). The active site involves Asp-105.

The protein belongs to the phospholipase A2 family. Group II subfamily. D49 sub-subfamily. Ca(2+) is required as a cofactor. Expressed by the venom gland.

The protein resides in the secreted. It catalyses the reaction a 1,2-diacyl-sn-glycero-3-phosphocholine + H2O = a 1-acyl-sn-glycero-3-phosphocholine + a fatty acid + H(+). Its function is as follows. Snake venom phospholipase A2 (PLA2) that shows potent hemolytic activity, and exhibits medium anticoagulant effects by binding to factor Xa (F10) and inhibiting the prothrombinase activity (IC(50) is 90 nM). It is one of the few phospholipases A2 capable of hydrolyzing the phospholipids of E.coli membranes in the presence of a bactericidal/permeability-increasing protein (BPI) of neutrophils. PLA2 catalyzes the calcium-dependent hydrolysis of the 2-acyl groups in 3-sn-phosphoglycerides. In Gloydius halys (Chinese water mocassin), this protein is Basic phospholipase A2 B.